The following is a 457-amino-acid chain: tRNA-2-methylthio-N(6)-dimethylallyladenosine synthase (457 aa).

One can recognise an MTTase N-terminal domain in the interval 3 to 120 (KKVYVKTFGC…LPQMIDARRA (118 aa)). Positions 12, 49, 83, 157, 161, and 164 each coordinate [4Fe-4S] cluster. One can recognise a Radical SAM core domain in the interval 143 to 377 (RVEGPSAFVS…QATIEENVAR (235 aa)). Residues 380–447 (QSMVGKVERI…PHSLRGELLL (68 aa)) enclose the TRAM domain.

Belongs to the methylthiotransferase family. MiaB subfamily. Monomer. [4Fe-4S] cluster is required as a cofactor.

The protein resides in the cytoplasm. The catalysed reaction is N(6)-dimethylallyladenosine(37) in tRNA + (sulfur carrier)-SH + AH2 + 2 S-adenosyl-L-methionine = 2-methylsulfanyl-N(6)-dimethylallyladenosine(37) in tRNA + (sulfur carrier)-H + 5'-deoxyadenosine + L-methionine + A + S-adenosyl-L-homocysteine + 2 H(+). Its function is as follows. Catalyzes the methylthiolation of N6-(dimethylallyl)adenosine (i(6)A), leading to the formation of 2-methylthio-N6-(dimethylallyl)adenosine (ms(2)i(6)A) at position 37 in tRNAs that read codons beginning with uridine. The sequence is that of tRNA-2-methylthio-N(6)-dimethylallyladenosine synthase from Burkholderia vietnamiensis (strain G4 / LMG 22486) (Burkholderia cepacia (strain R1808)).